The sequence spans 221 residues: Probable septum site-determining protein MinC (221 aa).

This sequence belongs to the MinC family. Interacts with MinD and FtsZ.

Functionally, cell division inhibitor that blocks the formation of polar Z ring septums. Rapidly oscillates between the poles of the cell to destabilize FtsZ filaments that have formed before they mature into polar Z rings. Prevents FtsZ polymerization. The polypeptide is Probable septum site-determining protein MinC (Prochlorococcus marinus (strain SARG / CCMP1375 / SS120)).